The following is a 129-amino-acid chain: Small ribosomal subunit protein uS11c (129 aa).

The protein belongs to the universal ribosomal protein uS11 family. Part of the 30S ribosomal subunit.

It localises to the plastid. The protein resides in the chloroplast. In Cyanidium caldarium (Red alga), this protein is Small ribosomal subunit protein uS11c.